A 237-amino-acid chain; its full sequence is Leucyl/phenylalanyl-tRNA--protein transferase (237 aa).

It belongs to the L/F-transferase family.

The protein resides in the cytoplasm. The enzyme catalyses N-terminal L-lysyl-[protein] + L-leucyl-tRNA(Leu) = N-terminal L-leucyl-L-lysyl-[protein] + tRNA(Leu) + H(+). It catalyses the reaction N-terminal L-arginyl-[protein] + L-leucyl-tRNA(Leu) = N-terminal L-leucyl-L-arginyl-[protein] + tRNA(Leu) + H(+). It carries out the reaction L-phenylalanyl-tRNA(Phe) + an N-terminal L-alpha-aminoacyl-[protein] = an N-terminal L-phenylalanyl-L-alpha-aminoacyl-[protein] + tRNA(Phe). Its function is as follows. Functions in the N-end rule pathway of protein degradation where it conjugates Leu, Phe and, less efficiently, Met from aminoacyl-tRNAs to the N-termini of proteins containing an N-terminal arginine or lysine. This chain is Leucyl/phenylalanyl-tRNA--protein transferase, found in Aromatoleum aromaticum (strain DSM 19018 / LMG 30748 / EbN1) (Azoarcus sp. (strain EbN1)).